A 306-amino-acid chain; its full sequence is Ribonuclease Z (306 aa).

Zn(2+) is bound by residues H63, H65, D67, H68, H141, D211, and H269. D67 acts as the Proton acceptor in catalysis.

It belongs to the RNase Z family. Homodimer. Zn(2+) serves as cofactor.

It catalyses the reaction Endonucleolytic cleavage of RNA, removing extra 3' nucleotides from tRNA precursor, generating 3' termini of tRNAs. A 3'-hydroxy group is left at the tRNA terminus and a 5'-phosphoryl group is left at the trailer molecule.. Functionally, zinc phosphodiesterase, which displays some tRNA 3'-processing endonuclease activity. Probably involved in tRNA maturation, by removing a 3'-trailer from precursor tRNA. In Staphylococcus epidermidis (strain ATCC 12228 / FDA PCI 1200), this protein is Ribonuclease Z.